The sequence spans 152 residues: UPF0225 protein YchJ (152 aa).

Belongs to the UPF0225 family.

The sequence is that of UPF0225 protein YchJ from Escherichia coli O6:K15:H31 (strain 536 / UPEC).